We begin with the raw amino-acid sequence, 333 residues long: Tubulin alpha chain (333 aa).

Positions 48, 52, 53, 88, 115, and 137 each coordinate GTP.

The protein belongs to the tubulin family. Dimer of alpha and beta chains. A typical microtubule is a hollow water-filled tube with an outer diameter of 25 nm and an inner diameter of 15 nM. Alpha-beta heterodimers associate head-to-tail to form protofilaments running lengthwise along the microtubule wall with the beta-tubulin subunit facing the microtubule plus end conferring a structural polarity. Microtubules usually have 13 protofilaments but different protofilament numbers can be found in some organisms and specialized cells. The cofactor is Mg(2+). In terms of processing, undergoes a tyrosination/detyrosination cycle, the cyclic removal and re-addition of a C-terminal tyrosine residue by the enzymes tubulin tyrosine carboxypeptidase (TTCP) and tubulin tyrosine ligase (TTL), respectively.

It localises to the cytoplasm. The protein localises to the cytoskeleton. The enzyme catalyses GTP + H2O = GDP + phosphate + H(+). Its function is as follows. Tubulin is the major constituent of microtubules, a cylinder consisting of laterally associated linear protofilaments composed of alpha- and beta-tubulin heterodimers. Microtubules grow by the addition of GTP-tubulin dimers to the microtubule end, where a stabilizing cap forms. Below the cap, tubulin dimers are in GDP-bound state, owing to GTPase activity of alpha-tubulin. In Dictyostelium purpureum (Slime mold), this protein is Tubulin alpha chain (tuba).